We begin with the raw amino-acid sequence, 320 residues long: HPr kinase/phosphorylase (320 aa).

Catalysis depends on residues His141 and Lys162. 156-163 provides a ligand contact to ATP; the sequence is GHSGLGKS. Ser163 lines the Mg(2+) pocket. Asp180 (proton acceptor; for phosphorylation activity. Proton donor; for dephosphorylation activity) is an active-site residue. The segment at 204–213 is important for the catalytic mechanism of both phosphorylation and dephosphorylation; sequence LEVRGLGILN. Glu205 contacts Mg(2+). Residue Arg248 is part of the active site. The interval 269–274 is important for the catalytic mechanism of dephosphorylation; sequence PVAVGR.

It belongs to the HPrK/P family. Homohexamer. The cofactor is Mg(2+).

The enzyme catalyses [HPr protein]-L-serine + ATP = [HPr protein]-O-phospho-L-serine + ADP + H(+). It carries out the reaction [HPr protein]-O-phospho-L-serine + phosphate + H(+) = [HPr protein]-L-serine + diphosphate. Catalyzes the ATP- as well as the pyrophosphate-dependent phosphorylation of a specific serine residue in HPr, a phosphocarrier protein of the phosphoenolpyruvate-dependent sugar phosphotransferase system (PTS). HprK/P also catalyzes the pyrophosphate-producing, inorganic phosphate-dependent dephosphorylation (phosphorolysis) of seryl-phosphorylated HPr (P-Ser-HPr). The protein is HPr kinase/phosphorylase of Neisseria gonorrhoeae (strain ATCC 700825 / FA 1090).